A 730-amino-acid polypeptide reads, in one-letter code: Ribosomal RNA large subunit methyltransferase K/L (730 aa).

Residues threonine 46–leucine 157 form the THUMP domain. A disordered region spans residues glycine 394 to arginine 418.

Belongs to the methyltransferase superfamily. RlmKL family.

The protein localises to the cytoplasm. The catalysed reaction is guanosine(2445) in 23S rRNA + S-adenosyl-L-methionine = N(2)-methylguanosine(2445) in 23S rRNA + S-adenosyl-L-homocysteine + H(+). It catalyses the reaction guanosine(2069) in 23S rRNA + S-adenosyl-L-methionine = N(2)-methylguanosine(2069) in 23S rRNA + S-adenosyl-L-homocysteine + H(+). In terms of biological role, specifically methylates the guanine in position 2445 (m2G2445) and the guanine in position 2069 (m7G2069) of 23S rRNA. This Pseudomonas putida (strain ATCC 700007 / DSM 6899 / JCM 31910 / BCRC 17059 / LMG 24140 / F1) protein is Ribosomal RNA large subunit methyltransferase K/L.